The chain runs to 254 residues: 3-deoxy-manno-octulosonate cytidylyltransferase (254 aa).

The protein belongs to the KdsB family.

Its subcellular location is the cytoplasm. The catalysed reaction is 3-deoxy-alpha-D-manno-oct-2-ulosonate + CTP = CMP-3-deoxy-beta-D-manno-octulosonate + diphosphate. The protein operates within nucleotide-sugar biosynthesis; CMP-3-deoxy-D-manno-octulosonate biosynthesis; CMP-3-deoxy-D-manno-octulosonate from 3-deoxy-D-manno-octulosonate and CTP: step 1/1. It functions in the pathway bacterial outer membrane biogenesis; lipopolysaccharide biosynthesis. In terms of biological role, activates KDO (a required 8-carbon sugar) for incorporation into bacterial lipopolysaccharide in Gram-negative bacteria. This chain is 3-deoxy-manno-octulosonate cytidylyltransferase, found in Pseudoalteromonas atlantica (strain T6c / ATCC BAA-1087).